The chain runs to 391 residues: Elongation factor Tu (391 aa).

The 192-residue stretch at 10–201 folds into the tr-type G domain; it reads KPHVNIGTIG…AVDEYIPTPA (192 aa). The interval 19–26 is G1; that stretch reads GHVDHGKT. 19–26 is a binding site for GTP; the sequence is GHVDHGKT. T26 lines the Mg(2+) pocket. Positions 55–59 are G2; sequence GITIS. Residues 76-79 are G3; it reads DCPG. Residues 76-80 and 131-134 each bind GTP; these read DCPGH and NKVD. Residues 131-134 form a G4 region; sequence NKVD. A G5 region spans residues 169–171; sequence SAL.

It belongs to the TRAFAC class translation factor GTPase superfamily. Classic translation factor GTPase family. EF-Tu/EF-1A subfamily. Monomer.

It localises to the cytoplasm. It catalyses the reaction GTP + H2O = GDP + phosphate + H(+). GTP hydrolase that promotes the GTP-dependent binding of aminoacyl-tRNA to the A-site of ribosomes during protein biosynthesis. The protein is Elongation factor Tu of Jannaschia sp. (strain CCS1).